We begin with the raw amino-acid sequence, 459 residues long: Ribulose bisphosphate carboxylase (459 aa).

Asn111 serves as a coordination point for substrate. Lys166 acts as the Proton acceptor in catalysis. Lys168 is a substrate binding site. Residues Lys191, Asp193, and Glu194 each coordinate Mg(2+). Lys191 carries the post-translational modification N6-carboxylysine. The active-site Proton acceptor is the His287. Residues Arg288, His321, and Ser368 each coordinate substrate.

Belongs to the RuBisCO large chain family. Type II subfamily. In terms of assembly, the complex is approximately 350 kDa when isolated from either T.denitrificans or R.sphaeroides, suggesting a homohexamer or homooctamer structure. The cofactor is Mg(2+).

It catalyses the reaction 2 (2R)-3-phosphoglycerate + 2 H(+) = D-ribulose 1,5-bisphosphate + CO2 + H2O. It carries out the reaction D-ribulose 1,5-bisphosphate + O2 = 2-phosphoglycolate + (2R)-3-phosphoglycerate + 2 H(+). RuBisCO catalyzes two reactions: the carboxylation of D-ribulose 1,5-bisphosphate, the primary event in carbon dioxide fixation, as well as the oxidative fragmentation of the pentose substrate. Both reactions occur simultaneously and in competition at the same active site. This is Ribulose bisphosphate carboxylase (cbbM) from Thiobacillus denitrificans (strain ATCC 25259 / T1).